We begin with the raw amino-acid sequence, 177 residues long: Tail tube protein (177 aa).

Belongs to the T4-like viruses Gp19 protein family.

Its subcellular location is the virion. In terms of biological role, structural component of the bacteriophage tail which consists of a contractile sheath, a tube and a baseplate. The central cylindrical segment of the tail consists of a rigid tube, composed of multiple copies of the tail tube protein. During infection, contraction of the sheath drives the central tube through the host outer membrane, creating a channel for DNA ejection from the capsid into the host cell. The polypeptide is Tail tube protein (Serratia marcescens (Serratia marcescens bacteriophage KSP90)).